The primary structure comprises 92 residues: Small ribosomal subunit protein uS19 (92 aa).

It belongs to the universal ribosomal protein uS19 family.

Functionally, protein S19 forms a complex with S13 that binds strongly to the 16S ribosomal RNA. The protein is Small ribosomal subunit protein uS19 of Variovorax paradoxus (strain S110).